The chain runs to 144 residues: Phospholipase A2 (144 aa).

The signal sequence occupies residues 1–15 (MKFLVLAALLTAGTA). A propeptide spans 16 to 22 (ASGVSPT) (activation peptide). Cystine bridges form between cysteine 33–cysteine 99, cysteine 49–cysteine 144, cysteine 51–cysteine 67, cysteine 66–cysteine 127, cysteine 73–cysteine 120, cysteine 83–cysteine 113, and cysteine 106–cysteine 118. Ca(2+) is bound by residues tyrosine 50, glycine 52, and glycine 54. Histidine 70 is an active-site residue. Residue aspartate 71 participates in Ca(2+) binding. Aspartate 121 is an active-site residue.

It belongs to the phospholipase A2 family. Monomer or homodimer. Ca(2+) is required as a cofactor. In terms of processing, activated by trypsin cleavage in the duodenum. Can also be activated by thrombin or autocatalytically.

It is found in the secreted. It carries out the reaction a 1,2-diacyl-sn-glycero-3-phosphocholine + H2O = a 1-acyl-sn-glycero-3-phosphocholine + a fatty acid + H(+). It catalyses the reaction 1,2-ditetradecanoyl-sn-glycero-3-phosphocholine + H2O = 1-tetradecanoyl-sn-glycero-3-phosphocholine + tetradecanoate + H(+). The catalysed reaction is 1,2-dihexadecanoyl-sn-glycero-3-phosphocholine + H2O = 1-hexadecanoyl-sn-glycero-3-phosphocholine + hexadecanoate + H(+). The enzyme catalyses 1-hexadecanoyl-2-(9Z-octadecenoyl)-sn-glycero-3-phosphocholine + H2O = 1-hexadecanoyl-sn-glycero-3-phosphocholine + (9Z)-octadecenoate + H(+). It carries out the reaction 1-hexadecanoyl-2-(5Z,8Z,11Z,14Z-eicosatetraenoyl)-sn-glycero-3-phosphocholine + H2O = 1-hexadecanoyl-sn-glycero-3-phosphocholine + (5Z,8Z,11Z,14Z)-eicosatetraenoate + H(+). It catalyses the reaction 1-hexadecanoyl-2-(9Z-octadecenoyl)-sn-glycero-3-phospho-(1'-sn-glycerol) + H2O = 1-hexadecanoyl-sn-glycero-3-phospho-(1'-sn-glycerol) + (9Z)-octadecenoate + H(+). The catalysed reaction is N-hexadecanoyl-1,2-di-(9Z-octadecenoyl)-sn-glycero-3-phosphoethanolamine + H2O = N-hexadecanoyl-1-(9Z-octadecenoyl)-sn-glycero-3-phosphoethanolamine + (9Z)-octadecenoate + H(+). The enzyme catalyses 1-hexadecanoyl-2-(9Z,12Z-octadecadienoyl)-sn-glycero-3-phosphoethanolamine + H2O = 1-hexadecanoyl-sn-glycero-3-phosphoethanolamine + (9Z,12Z)-octadecadienoate + H(+). It carries out the reaction N,1-dihexadecanoyl-2-(9Z,12Z-octadecadienoyl)-sn-glycero-3-phosphoethanolamine + H2O = N,1-dihexadecanoyl-sn-glycero-3-phosphoethanolamine + (9Z,12Z)-octadecadienoate + H(+). Its function is as follows. Secretory calcium-dependent phospholipase A2 that primarily targets dietary phospholipids in the intestinal tract. Hydrolyzes the ester bond of the fatty acyl group attached at sn-2 position of phospholipids (phospholipase A2 activity) with preference for phosphatidylethanolamines and phosphatidylglycerols over phosphatidylcholines. May play a role in the biosynthesis of N-acyl ethanolamines that regulate energy metabolism and inflammation in the intestinal tract. Hydrolyzes N-acyl phosphatidylethanolamines to N-acyl lysophosphatidylethanolamines, which are further cleaved by a lysophospholipase D to release N-acyl ethanolamines. May act in an autocrine and paracrine manner. Has anti-helminth activity in a process regulated by gut microbiota. Upon helminth infection of intestinal epithelia, directly affects phosphatidylethanolamine contents in the membrane of helminth larvae, likely controlling an array of phospholipid-mediated cellular processes such as membrane fusion and cell division while providing for better immune recognition, ultimately reducing larvae integrity and infectivity. In Oryctolagus cuniculus (Rabbit), this protein is Phospholipase A2 (PLA2G1B).